Here is a 246-residue protein sequence, read N- to C-terminus: Probable maleylacetoacetate isomerase 1 (246 aa).

A GST N-terminal domain is found at 32 to 116 (TKPILYSYWP…YLEETRPQPA (85 aa)). Glutathione contacts are provided by residues 42-47 (SSCSWR), valine 88, 100-101 (DS), glutamine 140, and 144-146 (NVS). The GST C-terminal domain occupies 121–241 (DPVKRAKIRE…HPSTQPDCPP (121 aa)).

The protein belongs to the GST superfamily. Zeta family. Glutathione is required as a cofactor.

It localises to the cytoplasm. It carries out the reaction 4-maleylacetoacetate = 4-fumarylacetoacetate. The catalysed reaction is RX + glutathione = an S-substituted glutathione + a halide anion + H(+). Its pathway is amino-acid degradation; L-phenylalanine degradation; acetoacetate and fumarate from L-phenylalanine: step 5/6. Functionally, catalyzes the glutathione dependent oxygenation of dichloroacetic acid to glyoxylic acid in vitro. Possesses low glutathione thioltransferase activity toward 4-hydroxynonenal (4-HNE). Has no glutathione thioltransferase activity with adrenochrome, phenethyl isothiocyanate (PEITC), 5-hydroperoxyeicosatetraenoic acid ((5S)-HpETE), prostaglandin A2 (PGA2) or 2-hydroxyethyldisulfide (HED). This is Probable maleylacetoacetate isomerase 1 (GstZ1) from Drosophila melanogaster (Fruit fly).